The chain runs to 328 residues: Cytochrome c biogenesis protein CcsA (328 aa).

Helical transmembrane passes span 13 to 33 (ISFSVVSIVLTIYFFTLLVNL), 46 to 66 (GIVITFFGITGLLFTRWIYSG), 73 to 93 (LYESLIFLSWAFSIIHMVSYF), 101 to 121 (LNAITAPSAIFIQGFATSGLL), 146 to 166 (MILGYGALLCGSLLSIALLVI), 234 to 254 (IISLGFIFLTVGILSGAVWAN), 263 to 283 (WDPKETWAFITWTIFAIYLHI), and 295 to 315 (AIVASIGFLLIWICYFGVNLL).

It belongs to the CcmF/CycK/Ccl1/NrfE/CcsA family. May interact with Ccs1.

Its subcellular location is the plastid. The protein localises to the chloroplast thylakoid membrane. Required during biogenesis of c-type cytochromes (cytochrome c6 and cytochrome f) at the step of heme attachment. In Barbarea verna (Land cress), this protein is Cytochrome c biogenesis protein CcsA.